The sequence spans 309 residues: Homoserine O-succinyltransferase (309 aa).

Catalysis depends on cysteine 142, which acts as the Acyl-thioester intermediate. Lysine 163 and serine 192 together coordinate substrate. Histidine 235 (proton acceptor) is an active-site residue. Glutamate 237 is a catalytic residue. Arginine 249 provides a ligand contact to substrate.

The protein belongs to the MetA family. As to quaternary structure, homodimer.

It localises to the cytoplasm. It catalyses the reaction L-homoserine + succinyl-CoA = O-succinyl-L-homoserine + CoA. Its pathway is amino-acid biosynthesis; L-methionine biosynthesis via de novo pathway; O-succinyl-L-homoserine from L-homoserine: step 1/1. Transfers a succinyl group from succinyl-CoA to L-homoserine, forming succinyl-L-homoserine. This Salmonella choleraesuis (strain SC-B67) protein is Homoserine O-succinyltransferase.